The following is a 1475-amino-acid chain: Sterol 3-beta-glucosyltransferase (1475 aa).

Disordered regions lie at residues 1–73 (MPPP…PPMF) and 94–218 (HDRF…EDDK). Positions 8 to 17 (LPLHGPAGAA) are enriched in low complexity. Over residues 30–40 (RVGKKLQKKRH) the composition is skewed to basic residues. Over residues 108-118 (GPQRDSADRSH) the composition is skewed to basic and acidic residues. A compositionally biased stretch (basic residues) spans 156-168 (EKHKRKISGHKLL). The GRAM 1 domain occupies 270–315 (QDIFEFDQPEAVIEEYPCWLLQSVLLQGYMYITAKHICFYSYLPKK). Residues 318–413 (EVVKSGYLSK…WVKSLQRVIF (96 aa)) form the PH domain. 3 disordered regions span residues 492–541 (ARLK…TTNK), 594–636 (SSPR…MEEP), and 653–715 (QILR…PVTP). Over residues 505 to 531 (QQQQQQHPMQPPMQASARSSMSGSRRA) the composition is skewed to low complexity. 2 stretches are compositionally biased toward polar residues: residues 621 to 634 (QQGSTDSYVQSSME) and 653 to 674 (QILRGSDVFQNPTMRRSGSASR). Positions 675–686 (TEVEKQQRRDPR) are enriched in basic and acidic residues. The GRAM 2 domain occupies 798–901 (RFRAHFALPE…RDDCAVTLLQ (104 aa)). Ser989, Arg990, Asp992, Ala1293, His1295, His1308, Ser1311, Gly1312, Thr1313, Asp1332, and Gln1333 together coordinate UDP-alpha-D-glucose. Residues 1413–1475 (IQVEPDEDEE…RVSPSQQSVA (63 aa)) are disordered. The segment covering 1416-1425 (EPDEDEESAE) has biased composition (acidic residues).

It belongs to the glycosyltransferase 28 family.

It localises to the cytoplasm. The protein resides in the preautophagosomal structure membrane. It carries out the reaction a sterol + UDP-alpha-D-glucose = a sterol 3-beta-D-glucoside + UDP + H(+). The enzyme catalyses ergosterol + UDP-alpha-D-glucose = ergosteryl 3-beta-D-glucoside + UDP + H(+). In terms of biological role, sterol glycosyltransferase responsible for the glycosylation of ergosterol to form ergosterol-glucoside. Mediates autophagic degradation of peroxisomes (pexophagy) and is involved in pathogenesis via peroxisome degradation inside appressoria that are developing into the host invasion stage. The polypeptide is Sterol 3-beta-glucosyltransferase (Glomerella lagenarium (Anthracnose fungus)).